Consider the following 501-residue polypeptide: Sensor histidine kinase PdtaS (501 aa).

Positions leucine 4 to alanine 150 are GAF. A PAS-like region spans residues aspartate 179–leucine 291. In terms of domain architecture, Histidine kinase spans glutamate 300–arginine 495. Histidine 303 is subject to Phosphohistidine; by autocatalysis.

Autophosphorylated.

It is found in the cytoplasm. The enzyme catalyses ATP + protein L-histidine = ADP + protein N-phospho-L-histidine.. In terms of biological role, member of the two-component regulatory system PdtaR/PdtaS. This two-component system plays an essential role in mycobacterial adaptation to poor nutrient conditions. Nutrient deprivation results in increasing intracellular concentrations of cyclic diguanosine monophosphate (c-di-GMP), which binds to the PdtaS sensor and promotes its autophosphorylation, leading to the activation of the signaling cascade. The phosphate group is then transferred to PdtaR. In addition, the PdtaR/PdtaS two-component system controls copper and nitric oxide (NO) resistance downstream of the intramembrane protease Rip1. This coupled Rip1/PdtaS/PdtaR circuit controls NO resistance and acute lung infection in mice by relieving PdtaR/PdtaS-mediated repression of isonitrile chalkophore biosynthesis. Two signals are required to fully inactivate the PdtaR/PdtaS system and mediate NO resistance: a cytoplasmic inhibitory signal through the PdtaS kinase mediated by direct sensing of NO and the production of PPE1-5', an NO-induced small RNA, to sequester PdtaR. The polypeptide is Sensor histidine kinase PdtaS (pdtaS) (Mycobacterium tuberculosis (strain CDC 1551 / Oshkosh)).